The following is a 902-amino-acid chain: MEGGGKPNSASNSRDDGNSVYPSKAPATGPAAADKRLGTPPGGGAAGKEHGNSVCFKVDGGGGEEPAGSFEDAEGPRRQYGFMQRQFTSMLQPGVNKFSLRMFGSQKAVEKEQERVKTAGFWIIHPYSDFRFYWDLIMLIMMVGNLVIIPVGITFFTEQTTTPWIIFNVASDTVFLLDLIMNFRTGTVNEDSSEIILDPKVIKMNYLKSWFVVDFISSIPVDYIFLIVEKGMDSEVYKTARALRIVRFTKILSLLRLLRLSRLIRYIHQWEEIFHMTYDLASAVVRIFNLIGMMLLLCHWDGCLQFLVPLLQDFPPDCWVSLNEMVNDSWGKQYSYALFKAMSHMLCIGYGAQAPVSMSDLWITMLSMIVGATCYAMFVGHATALIQSLDSSRRQYQEKYKQVEQYMSFHKLPADMRQKIHDYYEHRYQGKIFDEENILSELNDPLREEIVNFNCRKLVATMPLFANADPNFVTAMLSKLRFEVFQPGDYIIREGAVGKKMYFIQHGVAGVITKSSKEMKLTDGSYFGEICLLTKGRRTASVRADTYCRLYSLSVDNFNEVLEEYPMMRRAFETVAIDRLDRIGKKNSILLQKFQKDLNTGVFNNQENEILKQIVKHDREMVQAIPPINYPQMTALNCTSSTTTPTSRMRTQSPPVYTATSLSHSNLHSPSPSTQTPQPSAILSPCSYTTAVCSPPIQSPLATRTFHYASPTASQLSLMQQPQPQLQQSQVQQTQPQPQPQPQQPQQQQQQQQQQQQQQQQQQQQQQPQTPGSSTPKNEVHKSTQALHNTNLTREVRPLSASQPSLPHEVSTMISRPHPTVGESLASIPQPMATVHSTGLQAGSRSTVPQRVTLFRQMSSGAIPPNRGVPPAPPPPAAVQRESPSVLNKDPDAEKPRFASNL.

Positions 1-75 are disordered; it reads MEGGGKPNSA…PAGSFEDAEG (75 aa). At 1-131 the chain is on the cytoplasmic side; that stretch reads MEGGGKPNSA…WIIHPYSDFR (131 aa). A helical transmembrane segment spans residues 132-153; the sequence is FYWDLIMLIMMVGNLVIIPVGI. Topologically, residues 154–162 are extracellular; it reads TFFTEQTTT. Residues 163-183 form a helical membrane-spanning segment; the sequence is PWIIFNVASDTVFLLDLIMNF. The Cytoplasmic segment spans residues 184-204; sequence RTGTVNEDSSEIILDPKVIKM. Residues 205–225 form a helical membrane-spanning segment; that stretch reads NYLKSWFVVDFISSIPVDYIF. The Extracellular segment spans residues 226–249; that stretch reads LIVEKGMDSEVYKTARALRIVRFT. The helical; Voltage-sensor transmembrane segment at 250 to 270 threads the bilayer; the sequence is KILSLLRLLRLSRLIRYIHQW. At 271-284 the chain is on the cytoplasmic side; sequence EEIFHMTYDLASAV. A helical membrane pass occupies residues 285–307; that stretch reads VRIFNLIGMMLLLCHWDGCLQFL. The Extracellular segment spans residues 308-333; it reads VPLLQDFPPDCWVSLNEMVNDSWGKQ. N-linked (GlcNAc...) asparagine glycosylation occurs at asparagine 327. An intramembrane region (pore-forming) is located at residues 334 to 355; sequence YSYALFKAMSHMLCIGYGAQAP. The Selectivity filter signature appears at 347-351; it reads CIGYG. Residues 356 to 360 are Extracellular-facing; it reads VSMSD. Residues 361 to 381 traverse the membrane as a helical segment; sequence LWITMLSMIVGATCYAMFVGH. Over 382–902 the chain is Cytoplasmic; sequence ATALIQSLDS…AEKPRFASNL (521 aa). 3',5'-cyclic AMP contacts are provided by glycine 528, glutamate 529, cysteine 531, arginine 538, threonine 539, arginine 579, and arginine 582. Disordered stretches follow at residues 634 to 681, 713 to 824, and 858 to 902; these read TALN…QPSA, ASQL…VGES, and MSSG…ASNL. 3 stretches are compositionally biased toward low complexity: residues 639–680, 720–736, and 744–769; these read TSST…PQPS, QQPQ…QTQP, and QPQQ…QQPQ. Residues 770–793 are compositionally biased toward polar residues; the sequence is TPGSSTPKNEVHKSTQALHNTNLT. The span at 867–877 shows a compositional bias: pro residues; sequence RGVPPAPPPPA. The span at 889 to 902 shows a compositional bias: basic and acidic residues; it reads KDPDAEKPRFASNL.

The protein belongs to the potassium channel HCN family. In terms of assembly, homotetramer. Heterotetramer with HCN2. The potassium channel is composed of a homo- or heterotetrameric complex of pore-forming subunits. Interacts with KCNE2. Interacts with the SH3 domain of CSK. In terms of tissue distribution, highly expressed in cerebral cortex, cerebellum, throughout the hippocampus, in medial habenula, anterior dorsal nucleus in the thalamus, tenia tecta, several nuclei of the general motor system and in optic nerve layer. Detected in a subset of elongated cells in taste buds.

It is found in the cell membrane. It carries out the reaction Na(+)(in) = Na(+)(out). The catalysed reaction is K(+)(in) = K(+)(out). With respect to regulation, activated by cAMP, and at 10-100 times higher concentrations, also by cGMP. cAMP binding promotes tetramerization and formation of an active channel. Compared to other family members, cAMP has less stimulatory effect on HCN1 because part of the molecules already contain bound cAMP and form homotetramers when cAMP levels are low, this inherent tetramerization in HCN1 results in a weaker response to increased cAMP. Functionally, hyperpolarization-activated ion channel that are permeable to sodium and potassium ions. Exhibits weak selectivity for potassium over sodium ions. Contributes to the native pacemaker currents in heart (If) and in neurons (Ih). Participates in cerebellar mechanisms of motor learning. May mediate responses to sour stimuli. This is Potassium/sodium hyperpolarization-activated cyclic nucleotide-gated channel 1 (Hcn1) from Rattus norvegicus (Rat).